A 278-amino-acid chain; its full sequence is 3-methyl-2-oxobutanoate hydroxymethyltransferase (278 aa).

Residues Asp-43 and Asp-82 each contribute to the Mg(2+) site. Residues 43–44 (DS), Asp-82, and Lys-112 contribute to the 3-methyl-2-oxobutanoate site. Mg(2+) is bound at residue Glu-114. The active-site Proton acceptor is Glu-181.

This sequence belongs to the PanB family. Homodecamer; pentamer of dimers. It depends on Mg(2+) as a cofactor.

It localises to the cytoplasm. It catalyses the reaction 3-methyl-2-oxobutanoate + (6R)-5,10-methylene-5,6,7,8-tetrahydrofolate + H2O = 2-dehydropantoate + (6S)-5,6,7,8-tetrahydrofolate. It functions in the pathway cofactor biosynthesis; (R)-pantothenate biosynthesis; (R)-pantoate from 3-methyl-2-oxobutanoate: step 1/2. Its function is as follows. Catalyzes the reversible reaction in which hydroxymethyl group from 5,10-methylenetetrahydrofolate is transferred onto alpha-ketoisovalerate to form ketopantoate. This Bacillus cereus (strain B4264) protein is 3-methyl-2-oxobutanoate hydroxymethyltransferase.